A 623-amino-acid chain; its full sequence is Riboflavin biosynthesis protein PYRR, chloroplastic (623 aa).

A chloroplast-targeting transit peptide spans 1-45 (MPLPQPLLGGASPAPARAASSFLHPLLHTRHRVSTAPAAASSFVP). The region spanning 52 to 181 (ANDAMLLRRA…ALRNEGIQVD (130 aa)) is the CMP/dCMP-type deaminase domain.

It in the C-terminal section; belongs to the YbiA family.

The protein localises to the plastid. Its subcellular location is the chloroplast. It catalyses the reaction 5-amino-6-(5-phospho-D-ribitylamino)uracil + NADP(+) = 5-amino-6-(5-phospho-D-ribosylamino)uracil + NADPH + H(+). The catalysed reaction is 2,5-diamino-6-hydroxy-4-(5-phosphoribosylamino)-pyrimidine + H2O = 2,5,6-triamino-4-hydroxypyrimidine + D-ribose 5-phosphate. The enzyme catalyses 5-amino-6-(5-phospho-D-ribosylamino)uracil + H2O = 5,6-diaminouracil + D-ribose 5-phosphate. Its pathway is cofactor biosynthesis; riboflavin biosynthesis; 5-amino-6-(D-ribitylamino)uracil from GTP: step 3/4. In terms of biological role, pyrimidine reductase involved in the riboflavin biosynthesis pathway. Also has a non-functional N-terminal deaminase domain that lacks the catalytically essential zinc-binding residues. 39% activity when NADH replaces NADPH. No evidence for a phosphatase activity conferred by the N-terminal domain. Catalyzes the hydrolysis of the N-glycosidic bond in the first two intermediates of riboflavin biosynthesis, which are highly reactive metabolites, yielding relatively innocuous products. Thus, can divert a surplus of harmful intermediates into relatively harmless products and pre-empt the damage these intermediates would otherwise do. Has no activity against GTP, nucleoside monophosphates or ADP-ribose. The polypeptide is Riboflavin biosynthesis protein PYRR, chloroplastic (PYRR) (Zea mays (Maize)).